The sequence spans 276 residues: MLTAHHLDVARRHDTILRDLSLSIEPGRVTALLGRNGAGKSTLLKTFAGELTGSVAPHGVRVTGDVTLNGEPLARIDAPRLACLRAVLPQAAQPAFPFSVDEIVLLGRYPHARRSGARHVIAHRDRDIAWRALERAGADALVGRDVTTLSGGELARVQFARVLAQLWPDHDATESGPRYLLLDEPTAALDLAHQHRLLDTVRAVAREWQLGVLAIVHDPNLAARHADTIAMLADGTIVAHGAPRDVMTPAHIAQCYGFAVKMVETGDGTPPVMVPA.

Residues 2–259 (LTAHHLDVAR…AHIAQCYGFA (258 aa)) form the ABC transporter domain. Position 34-41 (34-41 (GRNGAGKS)) interacts with ATP.

The protein belongs to the ABC transporter superfamily. Heme (hemin) importer (TC 3.A.1.14.5) family. The complex is composed of two ATP-binding proteins (HmuV), two transmembrane proteins (HmuU) and a solute-binding protein (HmuT).

The protein resides in the cell inner membrane. Functionally, part of the ABC transporter complex HmuTUV involved in hemin import. Responsible for energy coupling to the transport system. This chain is Hemin import ATP-binding protein HmuV, found in Burkholderia cenocepacia (strain HI2424).